The primary structure comprises 243 residues: MKKQPGSFLFDGKAKTIFTTDKPYELLVHFKNDATAFNALKHAELEGKGKLNCQISASLFQLLEKEGVPTHFLGVQDETWMLVQKVDVIPLEIVVRNIACGSLCKETPLERGEKLSSPLLDFYYKDDQLGDPLLTDARLNLLGLTTSGQRLEIQSIAFKVNNILKNFFQKIDLLLVDFKLEMGLNNAGELLVADEISPDSCRLWDQRSDDPEQRILDKDRFRQDLGGVVEAYGEILKRIQGNP.

The protein belongs to the SAICAR synthetase family.

The catalysed reaction is 5-amino-1-(5-phospho-D-ribosyl)imidazole-4-carboxylate + L-aspartate + ATP = (2S)-2-[5-amino-1-(5-phospho-beta-D-ribosyl)imidazole-4-carboxamido]succinate + ADP + phosphate + 2 H(+). The protein operates within purine metabolism; IMP biosynthesis via de novo pathway; 5-amino-1-(5-phospho-D-ribosyl)imidazole-4-carboxamide from 5-amino-1-(5-phospho-D-ribosyl)imidazole-4-carboxylate: step 1/2. The polypeptide is Phosphoribosylaminoimidazole-succinocarboxamide synthase (Prochlorococcus marinus (strain MIT 9211)).